Consider the following 649-residue polypeptide: Phosphomethylpyrimidine synthase (649 aa).

Substrate is bound by residues Asn235, Met264, Tyr293, His329, 349-351 (SRG), 390-393 (DGLR), and Glu429. Residue His433 coordinates Zn(2+). Tyr456 is a binding site for substrate. His497 contacts Zn(2+). Cys577, Cys580, and Cys585 together coordinate [4Fe-4S] cluster. Residues 620-649 (GMRQKSQEFRDTGSELYHPAVGAKEAQLEE) are disordered. Over residues 621–632 (MRQKSQEFRDTG) the composition is skewed to basic and acidic residues.

It belongs to the ThiC family. In terms of assembly, homodimer. It depends on [4Fe-4S] cluster as a cofactor.

It carries out the reaction 5-amino-1-(5-phospho-beta-D-ribosyl)imidazole + S-adenosyl-L-methionine = 4-amino-2-methyl-5-(phosphooxymethyl)pyrimidine + CO + 5'-deoxyadenosine + formate + L-methionine + 3 H(+). It functions in the pathway cofactor biosynthesis; thiamine diphosphate biosynthesis. Catalyzes the synthesis of the hydroxymethylpyrimidine phosphate (HMP-P) moiety of thiamine from aminoimidazole ribotide (AIR) in a radical S-adenosyl-L-methionine (SAM)-dependent reaction. This is Phosphomethylpyrimidine synthase from Vibrio atlanticus (strain LGP32) (Vibrio splendidus (strain Mel32)).